Reading from the N-terminus, the 367-residue chain is Acryloyl-CoA reductase electron transfer subunit beta (367 aa).

Position 305-333 (305-333 (VYVALGISGAIQHKAGMQDSELIIAVNKD)) interacts with FAD.

In terms of assembly, heterohexadecamer; tetramer of tetramers. Each tetramer is composed of 2 alpha (AcrC), a beta (AcrA) and a gamma (AcrB) subunit.

It localises to the cytoplasm. Functionally, part of the ETF-acryloyl-CoA reductase complex involved in the pathway of L-alanine fermentation. The electron transfer flavoprotein (ETF) serves as a specific electron acceptor for acryloyl-CoA reductase. This chain is Acryloyl-CoA reductase electron transfer subunit beta (acrA), found in Anaerotignum propionicum (Clostridium propionicum).